Consider the following 616-residue polypeptide: Pyrophosphate--fructose 6-phosphate 1-phosphotransferase subunit alpha (616 aa).

The protein belongs to the phosphofructokinase type A (PFKA) family. PPi-dependent PFK group II subfamily. Clade 'Long' sub-subfamily. As to quaternary structure, tetramer of two alpha (regulatory) and two beta (catalytic) chains.

Its subcellular location is the cytoplasm. It functions in the pathway carbohydrate degradation; glycolysis; D-glyceraldehyde 3-phosphate and glycerone phosphate from D-glucose: step 3/4. With respect to regulation, allosterically activated by fructose 2,6-bisphosphate. Functionally, regulatory subunit of pyrophosphate--fructose 6-phosphate 1-phosphotransferase. This is Pyrophosphate--fructose 6-phosphate 1-phosphotransferase subunit alpha from Solanum tuberosum (Potato).